We begin with the raw amino-acid sequence, 328 residues long: MTDTRKPPRKKPQRPAKPAAPREKATLHPRNRHQGQYDFAKLIKSSPELAAFVILNPYGKESIDFANPQAVRVFNRALLKAFYGIAHWDIPADYLCPPIPGRADYLHFLADLLAEDNEGVIPRGASIKALDIGTGANCIYPLLGHSDYGWQFVGSDIDSTAIAAATTIVKANGLSKAISVRQQANRRQILLGLLDSSERFHVSLCNPPFHASLEEAQRGSQRKWRALGKADPKRKLPVLNFGGQSQELWCDGGEIGFITQLIQESALLPSQVAWFSTLVSKASNLPPIHSALKKAGALEVKVVEMGQGQKQSRFVAWTFLDKAQRAPG.

A disordered region spans residues 1-31 (MTDTRKPPRKKPQRPAKPAAPREKATLHPRN).

Belongs to the methyltransferase superfamily. METTL16/RlmF family.

Its subcellular location is the cytoplasm. It catalyses the reaction adenosine(1618) in 23S rRNA + S-adenosyl-L-methionine = N(6)-methyladenosine(1618) in 23S rRNA + S-adenosyl-L-homocysteine + H(+). In terms of biological role, specifically methylates the adenine in position 1618 of 23S rRNA. In Pseudomonas syringae pv. syringae (strain B728a), this protein is Ribosomal RNA large subunit methyltransferase F.